We begin with the raw amino-acid sequence, 281 residues long: Undecaprenyl-diphosphatase (281 aa).

7 helical membrane passes run 4 to 24 (ILLL…FLPI), 46 to 63 (AFEV…CWEF), 83 to 103 (FVLN…LFGK), 108 to 128 (VLFS…IIFW), 187 to 207 (AVAT…ATAY), 222 to 242 (EFTL…FVCV), and 257 to 277 (FAWY…TGLI).

It belongs to the UppP family.

Its subcellular location is the cell inner membrane. It carries out the reaction di-trans,octa-cis-undecaprenyl diphosphate + H2O = di-trans,octa-cis-undecaprenyl phosphate + phosphate + H(+). Functionally, catalyzes the dephosphorylation of undecaprenyl diphosphate (UPP). Confers resistance to bacitracin. In Polynucleobacter necessarius subsp. necessarius (strain STIR1), this protein is Undecaprenyl-diphosphatase.